A 1252-amino-acid polypeptide reads, in one-letter code: MFKCPERVSIKKKEDILDLPNLVEVQIKSYKQFLQIGKLAEERENIGLEEVFREIFPIKSYNEATILEYLSYNLGVPKYSPEECIRRGITYSVTLKVRFRLTDETGIKEEEVYMGTIPIMTDKGTFIINGAERVVVSQVHRSPGINFEQEKHSKGNVLFSFRIIPYRGSWLEAVFDINDLIYIHIDRKKRRRKILAMTFIRALGYSTDADIIEEFFSVEERSLRLEKDFVALVGKVLADNVVDADSSLVYGKAGEKLSTAMLKRILDAGVQSLKIAVGADENHPIIKMLAKDPTDSYEAALKDFYRRLRPGEPATLVNARSTIMRLFFDAKRYNLGRVGRYKLNKKLGFPLDDETLSQVTLRKEDVIGALKYLIRLRMGDEKTSIDDIDHLANRRVRSVGELIQNHCRSGLARMEKIVRERMNLFDFSSDTLTPGKIISAKGLVSVLKDFFSRSQLSQFMDQTNPVAELTHKRRLSALGPGGLNRERAGFEVRDVHASHYGRICPIETPEGPNIGLITSLSSFAKINEFGFIETPYRVVRDGIVTDEIEYMTADVEEECVIAQASAELDEYDMFKTPVCWARYKGEAFEADTSTVTHMDVSPKQLVSVVTGLIPFLEHDDANRALMGSNMQRQAVPLLKTEAAIVGTGLEGRAAKDSGAIIVAQEDGVVEYVDSYEIVVAKKNNPTLKDRYQLKKFLRSNSGTCINQTPLCSVGDVVTHGDVLADGPATDKGELALGKNVLVAFMPWYGYNFEDAIIISERLIKQDAYTSIYIEEFELTARDTKLGKEEITRDIPNVSEEVLANLGEDGVVRIGAEVKPGDILVGKITPKSETELAPEERLLRAIFGEKAADVKDASLTVPPGTEGVVMDVKVFSRKDRLSKSDDELVEEAVHLKDLQKEYKSQLAQLKVEHREKLGALLLNEKAPAAIIHRRSADILVQEGAIFDQETIELLERESLVDLLMAPCDMYDVLKDILSSYETAVQRLEVNYKTEAEHIKEGDADLDHGVIRQVKVYVASKRKLQVGDKMAGRHGNKGVVSKIVPEADMPFLANGETVQMILNPLGVPSRMNLGQVLETHLGYAAKTAGIYVKTPVFEGFPESRIWDMMIEQGLPEDGKSYLFDGKTGERFDSKVVVGYIYMLKLSHLIADKIHARSIGPYSLVTQQPLGGKAQMGGQRFGEMEVWALEAYGVAHMLQEILTVKSDDVSGRTRIYESIVKGENLLRSGTPESFNVLIKEMQGLGLDVRPMVVDA.

This sequence belongs to the RNA polymerase beta chain family. The RNAP catalytic core consists of 2 alpha, 1 beta, 1 beta' and 1 omega subunit. When a sigma factor is associated with the core the holoenzyme is formed, which can initiate transcription.

It catalyses the reaction RNA(n) + a ribonucleoside 5'-triphosphate = RNA(n+1) + diphosphate. Functionally, DNA-dependent RNA polymerase catalyzes the transcription of DNA into RNA using the four ribonucleoside triphosphates as substrates. This Chlamydia trachomatis serovar D (strain ATCC VR-885 / DSM 19411 / UW-3/Cx) protein is DNA-directed RNA polymerase subunit beta.